Here is a 209-residue protein sequence, read N- to C-terminus: Probable spore germination lipoprotein YlaJ (209 aa).

The first 16 residues, 1 to 16 (MRILFIIIQLTLILSA), serve as a signal peptide directing secretion. Cysteine 17 carries the N-palmitoyl cysteine lipid modification. Cysteine 17 carries the S-diacylglycerol cysteine lipid modification. 2 disordered regions span residues 26 to 54 (QNVE…KDNG) and 165 to 209 (NDVI…NNND). 2 stretches are compositionally biased toward basic and acidic residues: residues 28-54 (VEKE…KDNG) and 183-209 (LNRK…NNND).

It localises to the forespore inner membrane. Its function is as follows. Probably contributes, directly or indirectly, to early events in germination. This Bacillus subtilis (strain 168) protein is Probable spore germination lipoprotein YlaJ (ylaJ).